A 640-amino-acid polypeptide reads, in one-letter code: Tyrosine--tRNA ligase, mitochondrial (640 aa).

An L-tyrosine-binding site is contributed by tyrosine 100. Aspartate 104 is an ATP binding site. A 'HIGH' region motif is present at residues 105 to 114 (PTAPSLHIGH). Residues aspartate 144, tyrosine 248, glutamine 252, aspartate 255, and glutamine 274 each contribute to the L-tyrosine site. The 'KMSKS' region signature appears at 322–326 (KFGKS). Lysine 325 serves as a coordination point for ATP.

The protein belongs to the class-I aminoacyl-tRNA synthetase family.

It is found in the mitochondrion matrix. The enzyme catalyses tRNA(Tyr) + L-tyrosine + ATP = L-tyrosyl-tRNA(Tyr) + AMP + diphosphate + H(+). In terms of biological role, has both an aminoacyl-tRNA synthetase activity and is involved in the splicing of group I introns. This chain is Tyrosine--tRNA ligase, mitochondrial (YTS1), found in Podospora anserina (Pleurage anserina).